Reading from the N-terminus, the 438-residue chain is Succinyl-CoA:glutarate CoA-transferase (438 aa).

The transit peptide at 1 to 31 directs the protein to the mitochondrion; sequence MLATLARVAALRRTCLFSGRGGGRGLWTGRP. Catalysis depends on Asp-205, which acts as the Nucleophile. Lys-394 is subject to N6-acetyllysine.

This sequence belongs to the CoA-transferase III family. In terms of tissue distribution, highly expressed in kidney. Intermediate expression in liver, skeletal muscle and pancreas. Little to no expression detected in other tissues examined.

The protein localises to the mitochondrion. It catalyses the reaction glutarate + succinyl-CoA = glutaryl-CoA + succinate. It carries out the reaction 3-hydroxy-3-methylglutarate + succinyl-CoA = (3S)-3-hydroxy-3-methylglutaryl-CoA + succinate. The enzyme catalyses 3-hydroxy-3-methylglutarate + glutaryl-CoA = (3S)-3-hydroxy-3-methylglutaryl-CoA + glutarate. The catalysed reaction is hexanedioate + glutaryl-CoA = hexanedioyl-CoA + glutarate. It catalyses the reaction itaconate + glutaryl-CoA = itaconyl-CoA + glutarate. It carries out the reaction itaconate + succinyl-CoA = itaconyl-CoA + succinate. Its activity is regulated as follows. Inhibited by valsartan and losartan carboxylate. In terms of biological role, coenzyme A (CoA) transferase that reversibly catalyzes the transfer of a CoA moiety from a dicarboxyl-CoA to a dicarboxylate in a metabolite recycling process. Displays preference for succinyl-CoA and glutarate-CoA as dicarboxyl-CoA donors and glutarate, succinate, adipate/hexanedioate, itaconate and 3-hydroxy-3-methylglutarate as dicarboxylate acceptors. Acts on intermediates or end products of lysine and tryptophan degradation pathway, in particular catalyzes succinyl-CoA-dependent reesterification of free glutarate into glutaryl-CoA to prevent renal excretion of glutarate. Upon inflammation, may convert macrophage-derived itaconate to itaconyl-CoA in erythroid precursors where it negatively regulates the TCA cycle and heme synthesis to limit erythroid differentiation in the context of stress erythropoiesis. The protein is Succinyl-CoA:glutarate CoA-transferase of Homo sapiens (Human).